We begin with the raw amino-acid sequence, 254 residues long: Ribosomal RNA small subunit methyltransferase J (254 aa).

Residues Arg106–Asp107 and Asp177 contribute to the S-adenosyl-L-methionine site.

Belongs to the methyltransferase superfamily. RsmJ family.

The protein resides in the cytoplasm. It catalyses the reaction guanosine(1516) in 16S rRNA + S-adenosyl-L-methionine = N(2)-methylguanosine(1516) in 16S rRNA + S-adenosyl-L-homocysteine + H(+). In terms of biological role, specifically methylates the guanosine in position 1516 of 16S rRNA. The chain is Ribosomal RNA small subunit methyltransferase J from Nitrosococcus oceani (strain ATCC 19707 / BCRC 17464 / JCM 30415 / NCIMB 11848 / C-107).